Consider the following 416-residue polypeptide: Adipocyte plasma membrane-associated protein (416 aa).

Residues 1–32 (MSEADGLRQRRPLRPQVVTDDDGQAPEAKDGS) form a disordered region. Serine 2 is subject to N-acetylserine. The Cytoplasmic segment spans residues 2 to 40 (SEADGLRQRRPLRPQVVTDDDGQAPEAKDGSSFSGRVFR). Threonine 19 carries the post-translational modification Phosphothreonine. A helical; Signal-anchor for type II membrane protein membrane pass occupies residues 41–61 (VTFLMLAVSLTVPLLGAMMLL). Over 62–416 (ESPIDPQPLS…FLCRLSLQAV (355 aa)) the chain is Extracellular. Residues asparagine 160 and asparagine 196 are each glycosylated (N-linked (GlcNAc...) asparagine).

The protein belongs to the strictosidine synthase family. Liver, glomerular and tubular structures of the kidney, endothelial cells, arterial wall and pancreatic islets of Langerhans (at protein level). Found ubiquitously in adult as well as in embryonic tissues. In adult tissue, the highest expression is found in the liver, placenta and heart. Found on the cell surface of monocytes. In embryonic tissue, the highest expression levels is found in the liver and the kidney.

It localises to the membrane. Its function is as follows. Exhibits strong arylesterase activity with beta-naphthyl acetate and phenyl acetate. May play a role in adipocyte differentiation. The chain is Adipocyte plasma membrane-associated protein (APMAP) from Homo sapiens (Human).